Consider the following 107-residue polypeptide: Virulence factor PGA16 (107 aa).

Positions 1–18 (MRVFQIVYILIISNLIYA) are cleaved as a signal peptide. Residues 26-56 (SHHHKNDNNIADNTNNNNNNNNNNNNNNITN) are disordered. Residues 33-56 (NNIADNTNNNNNNNNNNNNNNITN) are compositionally biased toward low complexity. N53 and N56 each carry an N-linked (GlcNAc...) asparagine glycan. A lipid anchor (GPI-anchor amidated glycine) is attached at G76. A propeptide spans 77–107 (VAAMGGILGQNGWFYGDAGLMAAIFGAMLLL) (removed in mature form).

It is found in the cell membrane. In terms of biological role, cell surface GPI-anchored protein required for virulence. Mediates hyphal ramification which is important for the interaction with host cells. This chain is Virulence factor PGA16 (PGA16), found in Candida albicans (strain SC5314 / ATCC MYA-2876) (Yeast).